Here is a 69-residue protein sequence, read N- to C-terminus: Sodium channel toxin (69 aa).

Residues 2–66 form the LCN-type CS-alpha/beta domain; it reads KNDYPVDTAK…SPTKTSGRCN (65 aa). 4 disulfides stabilise this stretch: C14/C65, C18/C41, C27/C48, and C31/C50.

This sequence belongs to the long (4 C-C) scorpion toxin superfamily. Sodium channel inhibitor family. In terms of tissue distribution, expressed by the venom gland.

The protein resides in the secreted. In terms of biological role, inhibits voltage-gated sodium channels (Nav). This chain is Sodium channel toxin, found in Tityus metuendus (Scorpion).